A 395-amino-acid polypeptide reads, in one-letter code: Cation channel sperm-associated protein 3 (395 aa).

Residues 1 to 48 (MSQHFHHNPVRVKSGSLFATASEALQARLSKIKRKDKECQAYFRKVIK) lie on the Cytoplasmic side of the membrane. A helical transmembrane segment spans residues 49 to 71 (STFFQIVMITTVTTNSFLLVLGT). Over 72 to 80 (NYDIQFEFF) the chain is Extracellular. Residues 81-107 (RTFEVSELFFVSVYVCEFLMKVYVDPI) traverse the membrane as a helical segment. Position 108 (Thr108) is a topological domain, cytoplasmic. Residues 109–131 (YWKDGYNILDVIILIILTIPYLL) traverse the membrane as a helical segment. Residues 132-143 (RKIKGNHSAYLH) lie on the Extracellular side of the membrane. Residues 144 to 160 (FADGIQSLRILKLISYS) traverse the membrane as a helical segment. Residues 161-168 (RGIRTLII) lie on the Cytoplasmic side of the membrane. The helical transmembrane segment at 169–195 (AVGETVYTVASVLTLLFLLMFVFAILG) threads the bilayer. The Extracellular segment spans residues 196-216 (FCLFGVTDRGDLENWGNLASA). Positions 217-236 (FFTLFSLATVDGWTDLQEEL) form an intramembrane region, helical; Pore-forming. Residues 237–242 (DKRKFT) lie on the Extracellular side of the membrane. Residues 243-268 (VSRAFTILFILLASFIFLNMFVGVMI) form a helical membrane-spanning segment. At 269-395 (MHTEDSMKKF…ESSSSLSGLS (127 aa)) the chain is on the cytoplasmic side.

This sequence belongs to the cation channel sperm-associated (TC 1.A.1.19) family. In terms of assembly, component of the CatSper complex or CatSpermasome composed of the core pore-forming members CATSPER1, CATSPER2, CATSPER3 and CATSPER4 as well as auxiliary members CATSPERB, CATSPERG2, CATSPERD, CATSPERE, CATSPERZ, C2CD6/CATSPERT, SLCO6C1, TMEM249, TMEM262 and EFCAB9. HSPA1 may be an additional auxiliary complex member. The core complex members CATSPER1, CATSPER2, CATSPER3 and CATSPER4 form a heterotetrameric channel. The auxiliary CATSPERB, CATSPERG2, CATSPERD and CATSPERE subunits form a pavilion-like structure over the pore which stabilizes the complex through interactions with CATSPER4, CATSPER3, CATSPER1 and CATSPER2 respectively. SLCO6C1 interacts with CATSPERE and TMEM262/CATSPERH interacts with CATSPERB, further stabilizing the complex. C2CD6/CATSPERT interacts at least with CATSPERD and is required for targeting the CatSper complex in the flagellar membrane. Testis-specific.

Its subcellular location is the cell projection. The protein localises to the cilium. The protein resides in the flagellum membrane. The catalysed reaction is Ca(2+)(in) = Ca(2+)(out). Its activity is regulated as follows. In contrast to the human ortholog, not activated by progesterone. Activated by intracellular alkalinization. Pore-forming subunit of the CatSper complex, a sperm-specific voltage-gated calcium channel that plays a central role in sperm cell hyperactivation. Controls calcium entry to mediate the hyperactivated motility, a step needed for sperm motility which is essential late in the preparation of sperm for fertilization. The chain is Cation channel sperm-associated protein 3 (Catsper3) from Mus musculus (Mouse).